The chain runs to 163 residues: NADH-quinone oxidoreductase subunit 9 (163 aa).

4Fe-4S ferredoxin-type domains are found at residues 54-84 and 94-123; these read LRRY…IDAE and TRYD…EGPN. [4Fe-4S] cluster is bound by residues C64, C67, C70, C74, C103, C106, C109, and C113.

This sequence belongs to the complex I 23 kDa subunit family. As to quaternary structure, NDH-1 is composed of at least 14 different subunits, Nqo1 to Nqo14. The complex has a L-shaped structure, with the hydrophobic arm (subunits Nqo7, Nqo8, Nqo10 to Nqo14) embedded in the inner membrane and the hydrophilic peripheral arm (subunits Nqo1 to Nqo6, Nqo9) protruding into the bacterial cytoplasm. The hydrophilic domain contains all the redox centers. It depends on [4Fe-4S] cluster as a cofactor.

The protein resides in the cell inner membrane. It catalyses the reaction a quinone + NADH + 5 H(+)(in) = a quinol + NAD(+) + 4 H(+)(out). Functionally, NDH-1 shuttles electrons from NADH, via FMN and iron-sulfur (Fe-S) centers, to quinones in the respiratory chain. The immediate electron acceptor for the enzyme in this species is believed to be ubiquinone. Couples the redox reaction to proton translocation (for every two electrons transferred, four hydrogen ions are translocated across the cytoplasmic membrane), and thus conserves the redox energy in a proton gradient. In Paracoccus denitrificans, this protein is NADH-quinone oxidoreductase subunit 9.